Reading from the N-terminus, the 468-residue chain is MMIPIAIRWQGKKYDLEIEPNETGSTLKHQLYSLTQVPPERQKVIVKGGQLKDDVLLGSVGIKPNATLLMMGTAGELPTAMPIPAVESVEQEESEDDGYPSGLINLGNTCYMNSTVQMLRAIPELSDAVSQFNSSGGLVAEYRTLLNSMQSNAPVTPMRFLQSLRMEYPQFAEMSRETGGYAQQDAEECWSFLLSVLQRSLSSEWVQKNMAGKLLSTMKCDENEVQEQPSISHDTFLSLPCHISMHTSYMTQGILEGLTQKISKHSDVLNRDAMYSKISRISRLPNYLTVNFVRFYWKASIGKKAKILRKVKFPFELDAVEFCTPELSQKLIPVRDKLREIEKNDEEHERAAKRIKIQPSEDEKEAEAECRLTQVATCQSLVDPELADDEGANPTGLYDLVGVLSHAGASASSGHYQAWIRNSNNRAEWFRFNDAKVSIVPAEKIETLDGGGEADSAYILLYKAKDIA.

Residues 1 to 71 form the Ubiquitin-like domain; that stretch reads MMIPIAIRWQ…IKPNATLLMM (71 aa). One can recognise a USP domain in the interval 101-465; that stretch reads SGLINLGNTC…SAYILLYKAK (365 aa). Cys-110 functions as the Nucleophile in the catalytic mechanism. Catalysis depends on His-415, which acts as the Proton acceptor.

The protein belongs to the peptidase C19 family. USP14/UBP6 subfamily. In terms of assembly, component of the 26S proteasome. Interacts with rpn1.

The protein resides in the nucleus. It carries out the reaction Thiol-dependent hydrolysis of ester, thioester, amide, peptide and isopeptide bonds formed by the C-terminal Gly of ubiquitin (a 76-residue protein attached to proteins as an intracellular targeting signal).. Ubiquitin-protein hydrolase is involved both in the processing of ubiquitin precursors and of ubiquitinated proteins. This enzyme is a thiol protease that recognizes and hydrolyzes a peptide bond at the C-terminal glycine of ubiquitin. The chain is Ubiquitin carboxyl-terminal hydrolase 6 (ubp6) from Schizosaccharomyces pombe (strain 972 / ATCC 24843) (Fission yeast).